Reading from the N-terminus, the 372-residue chain is Putative KilA-N domain-containing protein L32 (372 aa).

Over residues methionine 1–arginine 12 the composition is skewed to basic residues. The interval methionine 1 to phenylalanine 129 is disordered. Positions arginine 14–arginine 36 are enriched in basic and acidic residues. The segment covering serine 37–serine 53 has biased composition (basic residues). The span at glutamate 79–serine 120 shows a compositional bias: acidic residues. One can recognise a KilA-N domain in the interval lysine 151–tryptophan 255.

This Acanthamoeba polyphaga (Amoeba) protein is Putative KilA-N domain-containing protein L32.